We begin with the raw amino-acid sequence, 426 residues long: Serine hydroxymethyltransferase (426 aa).

Residues Leu118 and Gly122–Leu124 contribute to the (6S)-5,6,7,8-tetrahydrofolate site. Lys227 is modified (N6-(pyridoxal phosphate)lysine).

It belongs to the SHMT family. As to quaternary structure, homodimer. Pyridoxal 5'-phosphate serves as cofactor.

Its subcellular location is the cytoplasm. The enzyme catalyses (6R)-5,10-methylene-5,6,7,8-tetrahydrofolate + glycine + H2O = (6S)-5,6,7,8-tetrahydrofolate + L-serine. It functions in the pathway one-carbon metabolism; tetrahydrofolate interconversion. Its pathway is amino-acid biosynthesis; glycine biosynthesis; glycine from L-serine: step 1/1. In terms of biological role, catalyzes the reversible interconversion of serine and glycine with tetrahydrofolate (THF) serving as the one-carbon carrier. This reaction serves as the major source of one-carbon groups required for the biosynthesis of purines, thymidylate, methionine, and other important biomolecules. Also exhibits THF-independent aldolase activity toward beta-hydroxyamino acids, producing glycine and aldehydes, via a retro-aldol mechanism. This is Serine hydroxymethyltransferase from Mycolicibacterium paratuberculosis (strain ATCC BAA-968 / K-10) (Mycobacterium paratuberculosis).